We begin with the raw amino-acid sequence, 344 residues long: DnaJ homolog subfamily C member 25 (344 aa).

The chain crosses the membrane as a helical span at residues 5–25 (WVLLVALSVLFLSGRAGALTE). Residues 33 to 108 (VCYDVLGVSR…ETRKDYDYML (76 aa)) form the J domain. 2 consecutive transmembrane segments (helical) span residues 134–154 (IVIL…WWSS) and 228–248 (ILLF…SWYV).

Belongs to the DNAJC25 family.

The protein resides in the membrane. The protein is DnaJ homolog subfamily C member 25 (dnajc25) of Xenopus laevis (African clawed frog).